A 229-amino-acid chain; its full sequence is MSELTKTEKRAVILLSGGLDSATVVAMARAEGYVCYTMSFDYGQRHRAELDAAARVAGDLGAVEHKVIGLNLNGIGGSALTDSSIAVPESPSEGIPVTYVPARNTVFLSLALGWAEVLGARDIFIGVNAVDYSGYPDCRPEFVESFERMANLATKAGVEGQGFTIRAPLQNLSKSDIVKAGTALGVDYSLTVSCYQADDQGRACGKCDSCRLRAEGFTAAGIADPTRYF.

15-25 (LSGGLDSATVV) contributes to the ATP binding site. Zn(2+)-binding residues include C194, C204, C207, and C210.

This sequence belongs to the QueC family. Zn(2+) is required as a cofactor.

It carries out the reaction 7-carboxy-7-deazaguanine + NH4(+) + ATP = 7-cyano-7-deazaguanine + ADP + phosphate + H2O + H(+). The protein operates within purine metabolism; 7-cyano-7-deazaguanine biosynthesis. Functionally, catalyzes the ATP-dependent conversion of 7-carboxy-7-deazaguanine (CDG) to 7-cyano-7-deazaguanine (preQ(0)). The chain is 7-cyano-7-deazaguanine synthase from Pseudomonas syringae pv. syringae (strain B728a).